The following is a 326-amino-acid chain: Acetyl-coenzyme A carboxylase carboxyl transferase subunit alpha (326 aa).

Residues 44–298 (KLETRAMQLR…KQALLDNLDE (255 aa)) form the CoA carboxyltransferase C-terminal domain.

It belongs to the AccA family. Acetyl-CoA carboxylase is a heterohexamer composed of biotin carboxyl carrier protein (AccB), biotin carboxylase (AccC) and two subunits each of ACCase subunit alpha (AccA) and ACCase subunit beta (AccD).

It is found in the cytoplasm. The catalysed reaction is N(6)-carboxybiotinyl-L-lysyl-[protein] + acetyl-CoA = N(6)-biotinyl-L-lysyl-[protein] + malonyl-CoA. The protein operates within lipid metabolism; malonyl-CoA biosynthesis; malonyl-CoA from acetyl-CoA: step 1/1. Component of the acetyl coenzyme A carboxylase (ACC) complex. First, biotin carboxylase catalyzes the carboxylation of biotin on its carrier protein (BCCP) and then the CO(2) group is transferred by the carboxyltransferase to acetyl-CoA to form malonyl-CoA. In Nostoc sp. (strain PCC 7120 / SAG 25.82 / UTEX 2576), this protein is Acetyl-coenzyme A carboxylase carboxyl transferase subunit alpha.